Reading from the N-terminus, the 333-residue chain is DNA-directed RNA polymerase subunit alpha (333 aa).

The segment at Met1 to Lys234 is alpha N-terminal domain (alpha-NTD). The alpha C-terminal domain (alpha-CTD) stretch occupies residues Ile248–Ala333.

This sequence belongs to the RNA polymerase alpha chain family. Homodimer. The RNAP catalytic core consists of 2 alpha, 1 beta, 1 beta' and 1 omega subunit. When a sigma factor is associated with the core the holoenzyme is formed, which can initiate transcription.

The catalysed reaction is RNA(n) + a ribonucleoside 5'-triphosphate = RNA(n+1) + diphosphate. Its function is as follows. DNA-dependent RNA polymerase catalyzes the transcription of DNA into RNA using the four ribonucleoside triphosphates as substrates. This Pseudomonas fluorescens (strain ATCC BAA-477 / NRRL B-23932 / Pf-5) protein is DNA-directed RNA polymerase subunit alpha.